The following is a 558-amino-acid chain: ATP synthase subunit alpha (558 aa).

172-179 (GDRKTGKT) is an ATP binding site. The tract at residues 536–558 (ESVKVHQAIPAKTSEKSKNSTPR) is disordered. Basic and acidic residues predominate over residues 548-558 (TSEKSKNSTPR).

It belongs to the ATPase alpha/beta chains family. F-type ATPases have 2 components, CF(1) - the catalytic core - and CF(0) - the membrane proton channel. CF(1) has five subunits: alpha(3), beta(3), gamma(1), delta(1), epsilon(1). CF(0) has three main subunits: a(1), b(2) and c(9-12). The alpha and beta chains form an alternating ring which encloses part of the gamma chain. CF(1) is attached to CF(0) by a central stalk formed by the gamma and epsilon chains, while a peripheral stalk is formed by the delta and b chains.

The protein localises to the cell membrane. It catalyses the reaction ATP + H2O + 4 H(+)(in) = ADP + phosphate + 5 H(+)(out). In terms of biological role, produces ATP from ADP in the presence of a proton gradient across the membrane. The alpha chain is a regulatory subunit. The protein is ATP synthase subunit alpha of Mycobacterium leprae (strain Br4923).